Here is a 488-residue protein sequence, read N- to C-terminus: Eukaryotic translation initiation factor 3 subunit L (488 aa).

2 disordered regions span residues 1 to 34 (MSLP…YREQ) and 427 to 449 (SEGG…HGKE). Residues 7–16 (QNRDAARRAP) show a composition bias toward basic and acidic residues. Residues 17-27 (DDDDDAEEETM) show a composition bias toward acidic residues. Residues 256–450 (DAIRMFSHIL…RSRLRHGKEI (195 aa)) form the PCI domain. The segment covering 431-440 (LLERRGDPQQ) has biased composition (basic and acidic residues).

The protein belongs to the eIF-3 subunit L family. Component of the eukaryotic translation initiation factor 3 (eIF-3) complex.

It localises to the cytoplasm. Its function is as follows. Component of the eukaryotic translation initiation factor 3 (eIF-3) complex, which is involved in protein synthesis of a specialized repertoire of mRNAs and, together with other initiation factors, stimulates binding of mRNA and methionyl-tRNAi to the 40S ribosome. The eIF-3 complex specifically targets and initiates translation of a subset of mRNAs involved in cell proliferation. The protein is Eukaryotic translation initiation factor 3 subunit L of Phaeosphaeria nodorum (strain SN15 / ATCC MYA-4574 / FGSC 10173) (Glume blotch fungus).